The sequence spans 306 residues: Lipoyl synthase (306 aa).

The [4Fe-4S] cluster site is built by Cys-55, Cys-60, Cys-66, Cys-81, Cys-85, Cys-88, and Ser-294. Residues 67–283 (WNHRTATFLL…RAYALARGFR (217 aa)) enclose the Radical SAM core domain.

It belongs to the radical SAM superfamily. Lipoyl synthase family. Requires [4Fe-4S] cluster as cofactor.

It is found in the cytoplasm. The catalysed reaction is [[Fe-S] cluster scaffold protein carrying a second [4Fe-4S](2+) cluster] + N(6)-octanoyl-L-lysyl-[protein] + 2 oxidized [2Fe-2S]-[ferredoxin] + 2 S-adenosyl-L-methionine + 4 H(+) = [[Fe-S] cluster scaffold protein] + N(6)-[(R)-dihydrolipoyl]-L-lysyl-[protein] + 4 Fe(3+) + 2 hydrogen sulfide + 2 5'-deoxyadenosine + 2 L-methionine + 2 reduced [2Fe-2S]-[ferredoxin]. Its pathway is protein modification; protein lipoylation via endogenous pathway; protein N(6)-(lipoyl)lysine from octanoyl-[acyl-carrier-protein]: step 2/2. Its function is as follows. Catalyzes the radical-mediated insertion of two sulfur atoms into the C-6 and C-8 positions of the octanoyl moiety bound to the lipoyl domains of lipoate-dependent enzymes, thereby converting the octanoylated domains into lipoylated derivatives. The sequence is that of Lipoyl synthase from Chloroflexus aggregans (strain MD-66 / DSM 9485).